Reading from the N-terminus, the 408-residue chain is Substance-P receptor (408 aa).

Topologically, residues 1–32 (MNSNISAQNDSALNSTIQNGTKINQFIQPPWQ) are extracellular. Asn-4, Asn-9, Asn-14, and Asn-19 each carry an N-linked (GlcNAc...) asparagine glycan. A helical transmembrane segment spans residues 33–55 (IALWSVAYSIIVIVSLVGNIIVM). The Cytoplasmic portion of the chain corresponds to 56–65 (WIIIAHKRMR). A helical membrane pass occupies residues 66-87 (TVTNYFLVNLAFAEASMSAFNT). Topologically, residues 88–107 (VINFTYAIHNHWYYGLIYCK) are extracellular. Cys-106 and Cys-181 form a disulfide bridge. Residues 108–129 (FHNFFPISAVFTSIYSMTAIAL) form a helical membrane-spanning segment. Residues 130 to 149 (DRYMAIIHPLKPRLSATATK) are Cytoplasmic-facing. Residues 150 to 170 (IVICVIWSFSFCMAFPLGYYA) form a helical membrane-spanning segment. Over 171 to 196 (DVYPMEGGDICYLNWPDSEENRKYEQ) the chain is Extracellular. Residues 197 to 221 (VYQVLVFCLIYILPLLVIGCAYTFI) form a helical membrane-spanning segment. At 222 to 250 (GMTLWASEIPGDSSDRYHEQVVAKRKVVK) the chain is on the cytoplasmic side. A helical membrane pass occupies residues 251-272 (MMIVVVCTFAICWLPFHIFFLL). Over 273-283 (QTLHEMTQKFY) the chain is Extracellular. Residues 284–308 (QQFYLAIMWLAMSSTMYNPIIYCCL) traverse the membrane as a helical segment. At 309–408 (NDRFRIGFKH…SSSFYSNNLA (100 aa)) the chain is on the cytoplasmic side. The S-palmitoyl cysteine moiety is linked to residue Cys-323. A disordered region spans residues 366 to 408 (DEEAEENGKSSKRLSLDLTSNGSSRSVCKTMSDSSSFYSNNLA). A compositionally biased stretch (polar residues) spans 382–408 (DLTSNGSSRSVCKTMSDSSSFYSNNLA).

The protein belongs to the G-protein coupled receptor 1 family.

Its subcellular location is the cell membrane. Its function is as follows. This is a receptor for the tachykinin neuropeptide substance P. It is probably associated with G proteins that activate a phosphatidylinositol-calcium second messenger system. This Aquarana catesbeiana (American bullfrog) protein is Substance-P receptor (TACR1).